Reading from the N-terminus, the 120-residue chain is Large ribosomal subunit protein uL24 (120 aa).

It belongs to the universal ribosomal protein uL24 family. As to quaternary structure, part of the 50S ribosomal subunit.

One of two assembly initiator proteins, it binds directly to the 5'-end of the 23S rRNA, where it nucleates assembly of the 50S subunit. Its function is as follows. Located at the polypeptide exit tunnel on the outside of the subunit. The sequence is that of Large ribosomal subunit protein uL24 from Archaeoglobus fulgidus (strain ATCC 49558 / DSM 4304 / JCM 9628 / NBRC 100126 / VC-16).